The following is a 266-amino-acid chain: Glucosamine-6-phosphate deaminase (266 aa).

Catalysis depends on aspartate 72, which acts as the Proton acceptor; for enolization step. The For ring-opening step role is filled by aspartate 141. Residue histidine 143 is the Proton acceptor; for ring-opening step of the active site. The For ring-opening step role is filled by glutamate 148.

Belongs to the glucosamine/galactosamine-6-phosphate isomerase family. NagB subfamily. In terms of assembly, homohexamer.

The catalysed reaction is alpha-D-glucosamine 6-phosphate + H2O = beta-D-fructose 6-phosphate + NH4(+). The protein operates within amino-sugar metabolism; N-acetylneuraminate degradation; D-fructose 6-phosphate from N-acetylneuraminate: step 5/5. Its activity is regulated as follows. Allosterically activated by N-acetylglucosamine 6-phosphate (GlcNAc6P). Functionally, catalyzes the reversible isomerization-deamination of glucosamine 6-phosphate (GlcN6P) to form fructose 6-phosphate (Fru6P) and ammonium ion. The chain is Glucosamine-6-phosphate deaminase from Salmonella typhi.